The chain runs to 456 residues: NADH-quinone oxidoreductase subunit N (456 aa).

The next 14 helical transmembrane spans lie at 6–26 (LFALSPLAALAIGAVIAMLLA), 45–65 (VAALLEILRAGVPPAPIGALF), 75–95 (TAYAALFGLAALVFLRVAGVA), 97–117 (EAPALVALVALGAASLTGAGH), 118–138 (AATLFLGLELISLSLIALFAF), 151–171 (FLVMSGLATSAQLLGVALIYA), 181–201 (WVGHGPLFALGTALLLAGLAF), 220–240 (PAGAAALAGVVSKAAVAIAIL), 252–272 (LWSAGLATLGAASVLVGNVLA), 281–301 (MLGYSTIAHSGYIAMILASGA), 308–328 (VLFYLGIYAPALTATLCASAM), 355–375 (GLLSLAGLPVAGGFVAKLYLF), 382–402 (ESWILLAIAMVGAALGFYYYI), and 426–446 (LLLIFCFGLIMLFGFEPLVLI).

Belongs to the complex I subunit 2 family. NDH-1 is composed of 14 different subunits. Subunits NuoA, H, J, K, L, M, N constitute the membrane sector of the complex.

The protein localises to the cell inner membrane. It catalyses the reaction a quinone + NADH + 5 H(+)(in) = a quinol + NAD(+) + 4 H(+)(out). In terms of biological role, NDH-1 shuttles electrons from NADH, via FMN and iron-sulfur (Fe-S) centers, to quinones in the respiratory chain. The immediate electron acceptor for the enzyme in this species is believed to be ubiquinone. Couples the redox reaction to proton translocation (for every two electrons transferred, four hydrogen ions are translocated across the cytoplasmic membrane), and thus conserves the redox energy in a proton gradient. The sequence is that of NADH-quinone oxidoreductase subunit N from Rhodopseudomonas palustris (strain BisA53).